Here is a 236-residue protein sequence, read N- to C-terminus: Ribose-5-phosphate isomerase A (236 aa).

Residues 31-34 (TGST), 84-87 (DGAD), and 97-100 (KGGG) each bind substrate. Residue glutamate 106 is the Proton acceptor of the active site. Lysine 124 contributes to the substrate binding site.

This sequence belongs to the ribose 5-phosphate isomerase family. As to quaternary structure, homodimer.

The catalysed reaction is aldehydo-D-ribose 5-phosphate = D-ribulose 5-phosphate. The protein operates within carbohydrate degradation; pentose phosphate pathway; D-ribose 5-phosphate from D-ribulose 5-phosphate (non-oxidative stage): step 1/1. In terms of biological role, catalyzes the reversible conversion of ribose-5-phosphate to ribulose 5-phosphate. This Polynucleobacter asymbioticus (strain DSM 18221 / CIP 109841 / QLW-P1DMWA-1) (Polynucleobacter necessarius subsp. asymbioticus) protein is Ribose-5-phosphate isomerase A.